The following is a 215-amino-acid chain: Cytochrome b6 (215 aa).

The helical transmembrane segment at Ile32–Phe52 threads the bilayer. Cys35 is a binding site for heme c. His86 and His100 together coordinate heme b. The next 3 helical transmembrane spans lie at Ala90 to Phe110, Leu116 to Tyr136, and Leu186 to Ile206. Residues His187 and His202 each contribute to the heme b site.

It belongs to the cytochrome b family. PetB subfamily. As to quaternary structure, the 4 large subunits of the cytochrome b6-f complex are cytochrome b6, subunit IV (17 kDa polypeptide, PetD), cytochrome f and the Rieske protein, while the 4 small subunits are PetG, PetL, PetM and PetN. The complex functions as a dimer. The cofactor is heme b. Heme c serves as cofactor.

Its subcellular location is the plastid. It localises to the chloroplast thylakoid membrane. In terms of biological role, component of the cytochrome b6-f complex, which mediates electron transfer between photosystem II (PSII) and photosystem I (PSI), cyclic electron flow around PSI, and state transitions. This is Cytochrome b6 from Klebsormidium bilatum (Filamentous green alga).